A 92-amino-acid polypeptide reads, in one-letter code: Large ribosomal subunit protein bL27 (92 aa).

The tract at residues 1–26 is disordered; sequence MAHKKGASSSSNGRDSESKRLGVKRF.

This sequence belongs to the bacterial ribosomal protein bL27 family.

This is Large ribosomal subunit protein bL27 from Corynebacterium aurimucosum (strain ATCC 700975 / DSM 44827 / CIP 107346 / CN-1) (Corynebacterium nigricans).